The sequence spans 198 residues: Large ribosomal subunit protein bL25 (198 aa).

This sequence belongs to the bacterial ribosomal protein bL25 family. CTC subfamily. Part of the 50S ribosomal subunit; part of the 5S rRNA/L5/L18/L25 subcomplex. Contacts the 5S rRNA. Binds to the 5S rRNA independently of L5 and L18.

This is one of the proteins that binds to the 5S RNA in the ribosome where it forms part of the central protuberance. The chain is Large ribosomal subunit protein bL25 from Pseudomonas putida (strain W619).